The following is a 590-amino-acid chain: tRNA-guanine(15) transglycosylase (590 aa).

Catalysis depends on Asp90, which acts as the Nucleophile. Asp125 provides a ligand contact to substrate. Zn(2+)-binding residues include Cys278, Cys280, and Cys283. The region spanning 502 to 577 (KGRVVVKGLF…HPFIIIRRHV (76 aa)) is the PUA domain.

The protein belongs to the archaeosine tRNA-ribosyltransferase family. Zn(2+) is required as a cofactor.

It carries out the reaction guanosine(15) in tRNA + 7-cyano-7-deazaguanine = 7-cyano-7-carbaguanosine(15) in tRNA + guanine. It participates in tRNA modification; archaeosine-tRNA biosynthesis. Its function is as follows. Exchanges the guanine residue with 7-cyano-7-deazaguanine (preQ0) at position 15 in the dihydrouridine loop (D-loop) of archaeal tRNAs. This Korarchaeum cryptofilum (strain OPF8) protein is tRNA-guanine(15) transglycosylase.